Consider the following 190-residue polypeptide: Protein GrpE (190 aa).

Over residues 1–18 (MTETPNTSSEEIQTSEPS) the composition is skewed to polar residues. Residues 1 to 21 (MTETPNTSSEEIQTSEPSPDN) form a disordered region.

It belongs to the GrpE family. As to quaternary structure, homodimer.

It localises to the cytoplasm. Its function is as follows. Participates actively in the response to hyperosmotic and heat shock by preventing the aggregation of stress-denatured proteins, in association with DnaK and GrpE. It is the nucleotide exchange factor for DnaK and may function as a thermosensor. Unfolded proteins bind initially to DnaJ; upon interaction with the DnaJ-bound protein, DnaK hydrolyzes its bound ATP, resulting in the formation of a stable complex. GrpE releases ADP from DnaK; ATP binding to DnaK triggers the release of the substrate protein, thus completing the reaction cycle. Several rounds of ATP-dependent interactions between DnaJ, DnaK and GrpE are required for fully efficient folding. The sequence is that of Protein GrpE from Chlamydia trachomatis serovar A (strain ATCC VR-571B / DSM 19440 / HAR-13).